The sequence spans 408 residues: Acetate kinase (408 aa).

Asn-10 contacts Mg(2+). Residue Lys-17 coordinates ATP. Arg-96 contributes to the substrate binding site. The active-site Proton donor/acceptor is the Asp-153. ATP-binding positions include 213 to 217 (HLGNG) and 288 to 290 (DLR). Glu-393 is a Mg(2+) binding site.

This sequence belongs to the acetokinase family. In terms of assembly, homodimer. The cofactor is Mg(2+). Mn(2+) is required as a cofactor.

It localises to the cytoplasm. It catalyses the reaction acetate + ATP = acetyl phosphate + ADP. It functions in the pathway metabolic intermediate biosynthesis; acetyl-CoA biosynthesis; acetyl-CoA from acetate: step 1/2. Its function is as follows. Catalyzes the formation of acetyl phosphate from acetate and ATP. Can also catalyze the reverse reaction. In Borrelia duttonii (strain Ly), this protein is Acetate kinase.